A 208-amino-acid chain; its full sequence is Uracil phosphoribosyltransferase (208 aa).

Residues Arg78, Arg103, and Asp130–Ser138 contribute to the 5-phospho-alpha-D-ribose 1-diphosphate site. Uracil contacts are provided by residues Ile193 and Gly198–Ala200. 5-phospho-alpha-D-ribose 1-diphosphate is bound at residue Asp199.

The protein belongs to the UPRTase family. It depends on Mg(2+) as a cofactor.

The enzyme catalyses UMP + diphosphate = 5-phospho-alpha-D-ribose 1-diphosphate + uracil. The protein operates within pyrimidine metabolism; UMP biosynthesis via salvage pathway; UMP from uracil: step 1/1. Allosterically activated by GTP. In terms of biological role, catalyzes the conversion of uracil and 5-phospho-alpha-D-ribose 1-diphosphate (PRPP) to UMP and diphosphate. The polypeptide is Uracil phosphoribosyltransferase (Citrobacter koseri (strain ATCC BAA-895 / CDC 4225-83 / SGSC4696)).